We begin with the raw amino-acid sequence, 674 residues long: Alpha-L-arabinofuranosidase 2 (674 aa).

The signal sequence occupies residues 1–24 (MDMETSWRFLRSVCLLSFILGSFS). Asn48, Asn180, Asn199, Asn210, Asn361, Asn522, and Asn548 each carry an N-linked (GlcNAc...) asparagine glycan.

The protein belongs to the glycosyl hydrolase 51 family. As to expression, high expression in flowers, siliques and stems. Observed in the vasculature of older root tissue, at the tip of anthers and in the petal blade of fully developed flowers, in floral abscission zones and in silique replum tissue. Expressed in the cambium and phloem, but not in the xylem or in the vascular system of floral tissues.

The protein localises to the secreted. It is found in the extracellular space. The protein resides in the extracellular matrix. It catalyses the reaction Hydrolysis of terminal non-reducing alpha-L-arabinofuranoside residues in alpha-L-arabinosides.. Its function is as follows. May be involved in the coordinated dissolution of the cell wall matrix during abscission and in the secondary cell wall formation in xylem vessels. In Arabidopsis thaliana (Mouse-ear cress), this protein is Alpha-L-arabinofuranosidase 2 (ASD2).